We begin with the raw amino-acid sequence, 394 residues long: MNKKTVRDIDVKGKRVFCRVDFNVPMQNGVVTDDTRIRAALPTIQYLMEQGAKVILASHLGRPKGKVVEEMRLNAVAERLSELLGKRVVKTDEAYGDTVKAAIAEMNEGDVLLLENVRFYPGEEKNDPELAKAFAELADVYVNDAFGAAHRAHASTEGIAHHLPAVAGFLMEKEIEVLGKALSNPDRPFTAIIGGAKVKDKIGVIENLLDKVDNLIIGGGLAYTFVKALGHEIGKSLLEEDKIDLAKSFMEKAKEKGVNFYMPVDAVVADDFSNDANKKVVNIDEIPSDWEGLDIGPKTRELYRDVILKSKLVIWNGPMGVFEMDAFAEGTKAVAQALADAKDTYTVIGGGDSAAAVEKFGLANKMDHISTGGGASLEFMEGKQLPGVVALNDK.

Residues 21–23, Arg-36, 59–62, Arg-118, and Arg-151 contribute to the substrate site; these read DFN and HLGR. Ser-183 carries the phosphoserine modification. Lys-201 and Gly-292 together coordinate ATP. Thr-299 is modified (phosphothreonine). ATP contacts are provided by residues Glu-323 and 350-353; that span reads GGDS.

This sequence belongs to the phosphoglycerate kinase family. As to quaternary structure, monomer.

It is found in the cytoplasm. It catalyses the reaction (2R)-3-phosphoglycerate + ATP = (2R)-3-phospho-glyceroyl phosphate + ADP. It participates in carbohydrate degradation; glycolysis; pyruvate from D-glyceraldehyde 3-phosphate: step 2/5. In Anoxybacillus flavithermus (strain DSM 21510 / WK1), this protein is Phosphoglycerate kinase.